Consider the following 199-residue polypeptide: Elongation factor Ts (199 aa).

Residues 81–84 (TDFV) are involved in Mg(2+) ion dislocation from EF-Tu.

Belongs to the EF-Ts family.

The protein resides in the cytoplasm. Associates with the EF-Tu.GDP complex and induces the exchange of GDP to GTP. It remains bound to the aminoacyl-tRNA.EF-Tu.GTP complex up to the GTP hydrolysis stage on the ribosome. The chain is Elongation factor Ts from Thermotoga petrophila (strain ATCC BAA-488 / DSM 13995 / JCM 10881 / RKU-1).